Here is a 196-residue protein sequence, read N- to C-terminus: Histone H1.0 (196 aa).

Disordered regions lie at residues 1–29 and 78–196; these read MTEN…PKYS and SGTL…GRKK. The region spanning 24–97 is the H15 domain; the sequence is DHPKYSDMIL…GASGSFRLAK (74 aa). Basic residues predominate over residues 104–196; it reads PAKKPKKEIK…ASPKKSGRKK (93 aa).

It belongs to the histone H1/H5 family.

Its subcellular location is the nucleus. It is found in the chromosome. Histones H1 are necessary for the condensation of nucleosome chains into higher-order structures. The histones H1.0 are found in cells that are in terminal stages of differentiation or that have low rates of cell division. The polypeptide is Histone H1.0 (h1-0) (Xenopus tropicalis (Western clawed frog)).